We begin with the raw amino-acid sequence, 461 residues long: Putative aldehyde dehydrogenase FUS7 (461 aa).

Glycine 220–glycine 225 serves as a coordination point for NAD(+). Residues glutamate 242 and cysteine 276 contribute to the active site.

Belongs to the aldehyde dehydrogenase family.

The enzyme catalyses an aldehyde + NAD(+) + H2O = a carboxylate + NADH + 2 H(+). In terms of biological role, putative aldehyde dehydrogenase; part of the gene cluster that mediates the biosynthesis of the mycotoxin fusarin C. Within the cluster, FUS1, FUS2, FUS8 and FUS9 are sufficient for fusarin production. The other FUS cluster members are not essential for fusarin C biosynthesis. This Gibberella fujikuroi (strain CBS 195.34 / IMI 58289 / NRRL A-6831) (Bakanae and foot rot disease fungus) protein is Putative aldehyde dehydrogenase FUS7.